Here is a 156-residue protein sequence, read N- to C-terminus: Protein-export protein SecB (156 aa).

Belongs to the SecB family. As to quaternary structure, homotetramer, a dimer of dimers. One homotetramer interacts with 1 SecA dimer.

The protein resides in the cytoplasm. Its function is as follows. One of the proteins required for the normal export of preproteins out of the cell cytoplasm. It is a molecular chaperone that binds to a subset of precursor proteins, maintaining them in a translocation-competent state. It also specifically binds to its receptor SecA. The sequence is that of Protein-export protein SecB from Aliivibrio fischeri (strain ATCC 700601 / ES114) (Vibrio fischeri).